We begin with the raw amino-acid sequence, 78 residues long: Large ribosomal subunit protein bL28 (78 aa).

Residues 1 to 24 (MSQVCQVTGKRPVTGNNVSHSQRK) are disordered.

The protein belongs to the bacterial ribosomal protein bL28 family.

In Chromohalobacter salexigens (strain ATCC BAA-138 / DSM 3043 / CIP 106854 / NCIMB 13768 / 1H11), this protein is Large ribosomal subunit protein bL28.